The chain runs to 366 residues: Probable neutral protease 2 homolog B (366 aa).

Residues 1–19 (MQVIVALAALSSLAAPALG) form the signal peptide. Positions 20 to 189 (FSIPRGVPVS…RGPRSRITKR (170 aa)) are excised as a propeptide. Cystine bridges form between C197–C267, C274–C292, and C306–C366. H317 is a Zn(2+) binding site. E318 is a catalytic residue. Zn(2+) is bound by residues H321 and D332.

This sequence belongs to the peptidase M35 family. Zn(2+) serves as cofactor.

The protein resides in the secreted. It catalyses the reaction Preferential cleavage of bonds with hydrophobic residues in P1'. Also 3-Asn-|-Gln-4 and 8-Gly-|-Ser-9 bonds in insulin B chain.. Functionally, probable secreted metalloprotease that shows high activities on basic nuclear substrates such as histone and protamine. May be involved in virulence. In Trichophyton rubrum (Athlete's foot fungus), this protein is Probable neutral protease 2 homolog B (NpII-B).